Reading from the N-terminus, the 207-residue chain is FMN-dependent NADH:quinone oxidoreductase 2 (207 aa).

FMN is bound by residues Ser9, 15–17 (SAS), and 97–100 (MWNF).

This sequence belongs to the azoreductase type 1 family. As to quaternary structure, homodimer. The cofactor is FMN.

It carries out the reaction 2 a quinone + NADH + H(+) = 2 a 1,4-benzosemiquinone + NAD(+). It catalyses the reaction N,N-dimethyl-1,4-phenylenediamine + anthranilate + 2 NAD(+) = 2-(4-dimethylaminophenyl)diazenylbenzoate + 2 NADH + 2 H(+). In terms of biological role, quinone reductase that provides resistance to thiol-specific stress caused by electrophilic quinones. Functionally, also exhibits azoreductase activity. Catalyzes the reductive cleavage of the azo bond in aromatic azo compounds to the corresponding amines. The polypeptide is FMN-dependent NADH:quinone oxidoreductase 2 (Burkholderia lata (strain ATCC 17760 / DSM 23089 / LMG 22485 / NCIMB 9086 / R18194 / 383)).